The primary structure comprises 177 residues: tRNA (cytidine(56)-2'-O)-methyltransferase (177 aa).

Residues Leu83 and 108 to 112 (GAEKV) each bind S-adenosyl-L-methionine.

The protein belongs to the aTrm56 family. As to quaternary structure, homodimer.

The protein resides in the cytoplasm. It catalyses the reaction cytidine(56) in tRNA + S-adenosyl-L-methionine = 2'-O-methylcytidine(56) in tRNA + S-adenosyl-L-homocysteine + H(+). In terms of biological role, specifically catalyzes the AdoMet-dependent 2'-O-ribose methylation of cytidine at position 56 in tRNAs. This Nitrosopumilus maritimus (strain SCM1) protein is tRNA (cytidine(56)-2'-O)-methyltransferase.